A 155-amino-acid chain; its full sequence is Sperm microtubule associated protein 1 (155 aa).

The protein is Sperm microtubule associated protein 1 (Spmap1) of Mus musculus (Mouse).